The primary structure comprises 224 residues: Phosphoribosylformylglycinamidine synthase subunit PurQ (224 aa).

The region spanning 3–224 (FGVVVFPGSN…GLLEKVVALA (222 aa)) is the Glutamine amidotransferase type-1 domain. The active-site Nucleophile is the Cys-86. Residues His-195 and Glu-197 contribute to the active site.

Part of the FGAM synthase complex composed of 1 PurL, 1 PurQ and 2 PurS subunits.

Its subcellular location is the cytoplasm. It catalyses the reaction N(2)-formyl-N(1)-(5-phospho-beta-D-ribosyl)glycinamide + L-glutamine + ATP + H2O = 2-formamido-N(1)-(5-O-phospho-beta-D-ribosyl)acetamidine + L-glutamate + ADP + phosphate + H(+). It carries out the reaction L-glutamine + H2O = L-glutamate + NH4(+). The protein operates within purine metabolism; IMP biosynthesis via de novo pathway; 5-amino-1-(5-phospho-D-ribosyl)imidazole from N(2)-formyl-N(1)-(5-phospho-D-ribosyl)glycinamide: step 1/2. Its function is as follows. Part of the phosphoribosylformylglycinamidine synthase complex involved in the purines biosynthetic pathway. Catalyzes the ATP-dependent conversion of formylglycinamide ribonucleotide (FGAR) and glutamine to yield formylglycinamidine ribonucleotide (FGAM) and glutamate. The FGAM synthase complex is composed of three subunits. PurQ produces an ammonia molecule by converting glutamine to glutamate. PurL transfers the ammonia molecule to FGAR to form FGAM in an ATP-dependent manner. PurS interacts with PurQ and PurL and is thought to assist in the transfer of the ammonia molecule from PurQ to PurL. In Trichormus variabilis (strain ATCC 29413 / PCC 7937) (Anabaena variabilis), this protein is Phosphoribosylformylglycinamidine synthase subunit PurQ.